The primary structure comprises 478 residues: UDP-N-acetylmuramate--L-alanine ligase (478 aa).

An ATP-binding site is contributed by 112-118; the sequence is GTHGKTT.

It belongs to the MurCDEF family.

It is found in the cytoplasm. The catalysed reaction is UDP-N-acetyl-alpha-D-muramate + L-alanine + ATP = UDP-N-acetyl-alpha-D-muramoyl-L-alanine + ADP + phosphate + H(+). It functions in the pathway cell wall biogenesis; peptidoglycan biosynthesis. Its function is as follows. Cell wall formation. The sequence is that of UDP-N-acetylmuramate--L-alanine ligase from Polaromonas naphthalenivorans (strain CJ2).